The primary structure comprises 414 residues: CinA-like protein (414 aa).

It belongs to the CinA family.

This Acidobacterium capsulatum (strain ATCC 51196 / DSM 11244 / BCRC 80197 / JCM 7670 / NBRC 15755 / NCIMB 13165 / 161) protein is CinA-like protein.